The sequence spans 1071 residues: Myosin IF heavy chain (1071 aa).

Residues 40–736 (VGLTDMCFLE…TLFHFEELRQ (697 aa)) enclose the Myosin motor domain. 134–141 (GESGSGKT) serves as a coordination point for ATP. An actin-binding region spans residues 610 to 632 (INDLIGKLNTCQPHYIRCIKSNE). An IQ domain is found at 739-768 (LPSIVITIQRVWRGYKVRKWYKQELQRLRE). Residues 870-1069 (SRKKEWDCRR…KGNTAIVYYN (200 aa)) enclose the TH1 domain.

Belongs to the TRAFAC class myosin-kinesin ATPase superfamily. Myosin family. Myosin I heavy chain is single-headed. Dimer of a heavy and a light chain. Inability to self-assemble into filaments.

In terms of biological role, myosin is a protein that binds to actin and has ATPase activity that is activated by actin. This is Myosin IF heavy chain (myoF) from Dictyostelium discoideum (Social amoeba).